A 957-amino-acid chain; its full sequence is Glycine dehydrogenase (decarboxylating) (957 aa).

Residue Lys702 is modified to N6-(pyridoxal phosphate)lysine.

It belongs to the GcvP family. The glycine cleavage system is composed of four proteins: P, T, L and H. Requires pyridoxal 5'-phosphate as cofactor.

It carries out the reaction N(6)-[(R)-lipoyl]-L-lysyl-[glycine-cleavage complex H protein] + glycine + H(+) = N(6)-[(R)-S(8)-aminomethyldihydrolipoyl]-L-lysyl-[glycine-cleavage complex H protein] + CO2. Functionally, the glycine cleavage system catalyzes the degradation of glycine. The P protein binds the alpha-amino group of glycine through its pyridoxal phosphate cofactor; CO(2) is released and the remaining methylamine moiety is then transferred to the lipoamide cofactor of the H protein. The polypeptide is Glycine dehydrogenase (decarboxylating) (Bradyrhizobium sp. (strain BTAi1 / ATCC BAA-1182)).